Reading from the N-terminus, the 173-residue chain is Dirigent protein 8 (173 aa).

An N-terminal signal peptide occupies residues 1-22 (MTNLILIFAAQILLFYAVASVG). 3 N-linked (GlcNAc...) asparagine glycosylation sites follow: N69, N90, and N125.

This sequence belongs to the plant dirigent protein family. As to quaternary structure, homodimer.

It localises to the secreted. It is found in the extracellular space. Its subcellular location is the apoplast. In terms of biological role, dirigent proteins impart stereoselectivity on the phenoxy radical-coupling reaction, yielding optically active lignans from two molecules of coniferyl alcohol in the biosynthesis of lignans, flavonolignans, and alkaloids and thus plays a central role in plant secondary metabolism. The sequence is that of Dirigent protein 8 (DIR8) from Arabidopsis thaliana (Mouse-ear cress).